The sequence spans 23 residues: Potassium channel toxin kappa-KTx 1.3 (23 aa).

Intrachain disulfides connect cysteine 4-cysteine 22 and cysteine 8-cysteine 18.

This sequence belongs to the short scorpion toxin superfamily. Potassium channel inhibitor kappa-KTx family. Kappa-KTx 1 subfamily. Monomer. Post-translationally, is not amidated. As to expression, expressed by the venom gland.

The protein resides in the secreted. In terms of biological role, shows very weak blocking activity on voltage-gated potassium channels Kv10.1/KCNH1/EAG1 (6.2% inhibition by 40 uM of the toxin). Has no effect on the other voltage-gated potassium channels tested. The protein is Potassium channel toxin kappa-KTx 1.3 of Heterometrus spinifer (Asia giant forest scorpion).